Here is a 239-residue protein sequence, read N- to C-terminus: Biosynthetic peptidoglycan transglycosylase (239 aa).

A helical membrane pass occupies residues 29–49 (GMFGLGALMLVWIVAYAVVPV).

Belongs to the glycosyltransferase 51 family.

The protein resides in the cell inner membrane. It catalyses the reaction [GlcNAc-(1-&gt;4)-Mur2Ac(oyl-L-Ala-gamma-D-Glu-L-Lys-D-Ala-D-Ala)](n)-di-trans,octa-cis-undecaprenyl diphosphate + beta-D-GlcNAc-(1-&gt;4)-Mur2Ac(oyl-L-Ala-gamma-D-Glu-L-Lys-D-Ala-D-Ala)-di-trans,octa-cis-undecaprenyl diphosphate = [GlcNAc-(1-&gt;4)-Mur2Ac(oyl-L-Ala-gamma-D-Glu-L-Lys-D-Ala-D-Ala)](n+1)-di-trans,octa-cis-undecaprenyl diphosphate + di-trans,octa-cis-undecaprenyl diphosphate + H(+). It functions in the pathway cell wall biogenesis; peptidoglycan biosynthesis. In terms of biological role, peptidoglycan polymerase that catalyzes glycan chain elongation from lipid-linked precursors. The polypeptide is Biosynthetic peptidoglycan transglycosylase (Jannaschia sp. (strain CCS1)).